Reading from the N-terminus, the 423-residue chain is Histidine--tRNA ligase (423 aa).

It belongs to the class-II aminoacyl-tRNA synthetase family. In terms of assembly, homodimer.

It is found in the cytoplasm. The catalysed reaction is tRNA(His) + L-histidine + ATP = L-histidyl-tRNA(His) + AMP + diphosphate + H(+). This is Histidine--tRNA ligase from Haemophilus influenzae (strain 86-028NP).